The following is a 122-amino-acid chain: UPF0102 protein CLH_1204 (122 aa).

The protein belongs to the UPF0102 family.

This Clostridium botulinum (strain Alaska E43 / Type E3) protein is UPF0102 protein CLH_1204.